The sequence spans 306 residues: MPIKIPTELPAFKVLSNENIFVMNDSRAKTQDIRPLKIAILNLMPKKILAENQLLRHLSNTPLQVEVKLIQTKSYVSQNTPIEHLEKFYTYFDDIKDEKFDGLIITGAPVEQMAFEDITYWNELTEIMKWSKSNVFSTLHICWGAQAGLYYHYDIQKYKLEKKISGVFSHWVNDENADLTRGLDDIFYVPHSRHTEVKKEDINKISELEILSESKEAGIFIVATKDRRKIFFMGHPEYDRNTLKEEYMRDREKGDNVDIPQNYFVDNDINSTPKFTWRGSSNIIFGNWLNYCVYQNTPYDINDISK.

Residue Cys-142 is the Acyl-thioester intermediate of the active site. The substrate site is built by Lys-163 and Ser-192. His-235 acts as the Proton acceptor in catalysis. Residue Glu-237 is part of the active site. Arg-249 is a substrate binding site.

The protein belongs to the MetA family.

It localises to the cytoplasm. The catalysed reaction is L-homoserine + acetyl-CoA = O-acetyl-L-homoserine + CoA. The protein operates within amino-acid biosynthesis; L-methionine biosynthesis via de novo pathway; O-acetyl-L-homoserine from L-homoserine: step 1/1. Transfers an acetyl group from acetyl-CoA to L-homoserine, forming acetyl-L-homoserine. The chain is Homoserine O-acetyltransferase from Clostridium botulinum (strain Eklund 17B / Type B).